Consider the following 337-residue polypeptide: UDP-glucose 4-epimerase (337 aa).

NAD(+) contacts are provided by residues 11–12 (YI), 31–36 (DNLSNA), 58–59 (DL), 80–84 (FAGLK), asparagine 99, serine 124, tyrosine 149, lysine 153, and phenylalanine 178. Substrate is bound by residues serine 124 and tyrosine 149. Tyrosine 149 acts as the Proton acceptor in catalysis. Substrate is bound by residues asparagine 179, 199 to 200 (NL), 216 to 218 (GIF), arginine 231, and 292 to 295 (RDGD).

Belongs to the NAD(P)-dependent epimerase/dehydratase family. Homodimer. NAD(+) serves as cofactor.

It carries out the reaction UDP-alpha-D-glucose = UDP-alpha-D-galactose. It participates in carbohydrate metabolism; galactose metabolism. Involved in the metabolism of galactose. Catalyzes the conversion of UDP-galactose (UDP-Gal) to UDP-glucose (UDP-Glc) through a mechanism involving the transient reduction of NAD. The chain is UDP-glucose 4-epimerase (galE) from Erwinia amylovora (Fire blight bacteria).